A 325-amino-acid chain; its full sequence is Germination protease (325 aa).

The propeptide occupies 1–7 (MYNVRTD).

This sequence belongs to the peptidase A25 family. Homotetramer. In terms of processing, autoproteolytically processed. The inactive tetrameric zymogen termed p46 autoprocesses to a smaller form termed p41, which is active only during spore germination.

It catalyses the reaction Endopeptidase action with P4 Glu or Asp, P1 preferably Glu &gt; Asp, P1' hydrophobic and P2' Ala.. Functionally, initiates the rapid degradation of small, acid-soluble proteins during spore germination. In Clostridium perfringens (strain SM101 / Type A), this protein is Germination protease.